Reading from the N-terminus, the 200-residue chain is uncharacterized protein (200 aa).

A signal peptide spans 1–24 (MAIDKLPLLLFLSILLCLNRPVLS). N-linked (GlcNAc...) asparagine glycans are attached at residues asparagine 44, asparagine 72, asparagine 99, asparagine 124, and asparagine 135. The GPI-anchor amidated serine moiety is linked to residue serine 174. Residues 175–200 (NGFTFGIGLVSYLVIFMYSSFCFFLF) constitute a propeptide, removed in mature form.

It belongs to the UPF0277 family.

The protein localises to the cell membrane. This is an uncharacterized protein from Arabidopsis thaliana (Mouse-ear cress).